Here is a 492-residue protein sequence, read N- to C-terminus: Zinc finger protein GLIS2 (492 aa).

A disordered region spans residues 49–101; that stretch reads VITPICSSPPPGFRYRDGDSPPFSSPPIVDLSLSPPSGTDSPSRSSLSPDRAA. A transcription activation region spans residues 69–129; it reads PPFSSPPIVD…SPFQFFLPLG (61 aa). The segment covering 82-97 has biased composition (low complexity); that stretch reads SPPSGTDSPSRSSLSP. The transcription repression stretch occupies residues 138 to 161; the sequence is MFMSPPKENRLSLEFTEQKQLVCQ. The C2H2-type 1 zinc finger occupies 158-183; sequence LVCQWAKCNRLFELLQELVDHVNDFH. The C2H2-type 2; degenerate zinc finger occupies 192–219; sequence YCCHWEGCARRGRGFNARYKMLIHIRTH. 3 consecutive C2H2-type zinc fingers follow at residues 225–247, 253–277, and 283–307; these read HCCP…NRSH, YMCP…TRTH, and YYCK…IKAH. A compositionally biased stretch (basic and acidic residues) spans 423 to 444; the sequence is VENEKRPKGQRGDSSERTDGSK. Residues 423–450 are disordered; that stretch reads VENEKRPKGQRGDSSERTDGSKLRPGSI.

The protein belongs to the GLI C2H2-type zinc-finger protein family.

The protein localises to the nucleus speckle. It is found in the cytoplasm. Can act either as a transcription repressor or as a transcription activator, depending on the cell context. May be involved in neuron differentiation. The polypeptide is Zinc finger protein GLIS2 (glis2) (Xenopus laevis (African clawed frog)).